Reading from the N-terminus, the 445-residue chain is GTPase Der (445 aa).

EngA-type G domains lie at 3-167 and 180-353; these read PVIA…YAGQ and VKIA…AAAM. GTP-binding positions include 9–16, 56–60, 119–122, 186–193, 233–237, and 298–301; these read GRPNVGKS, DTGGF, NKAE, DTAGL, and NKWD. The 85-residue stretch at 354 to 438 folds into the KH-like domain; sequence AKLPTPKLTR…PLRIEFRSST (85 aa).

The protein belongs to the TRAFAC class TrmE-Era-EngA-EngB-Septin-like GTPase superfamily. EngA (Der) GTPase family. Associates with the 50S ribosomal subunit.

In terms of biological role, GTPase that plays an essential role in the late steps of ribosome biogenesis. This chain is GTPase Der, found in Paraburkholderia xenovorans (strain LB400).